The sequence spans 2968 residues: Polyketide synthase 37 (2968 aa).

Residues 32–454 form the Ketosynthase family 3 (KS3) domain; that stretch reads KEPIAIIGIG…GSNSSLFLSS (423 aa). Active-site for beta-ketoacyl synthase activity residues include C198, H338, and H378. The tract at residues 624–950 is malonyl-CoA:ACP transacylase (MAT) domain; the sequence is FIFSGQGQQW…LSTLSKNSNS (327 aa). S718 acts as the For malonyltransferase activity in catalysis. Residues 1017 to 1157 are N-terminal hotdog fold; that stretch reads PPMFISLDRK…GIIKYGTNYL (141 aa). A PKS/mFAS DH domain is found at 1017-1350; that stretch reads PPMFISLDRK…FKGINSSSSS (334 aa). The tract at residues 1031–1345 is dehydratase (DH) domain; that stretch reads TPSFEVRLNQ…LTNLEFKGIN (315 aa). Residue H1049 is the Proton acceptor; for dehydratase activity of the active site. The interval 1183–1350 is C-terminal hotdog fold; it reads FKSFNSNEFY…FKGINSSSSS (168 aa). D1257 acts as the Proton donor; for dehydratase activity in catalysis. Residues 1522 to 1547 form a disordered region; sequence SCGGGGGSTNNTISNSSSSISSIDNG. Over residues 1530 to 1547 the composition is skewed to low complexity; that stretch reads TNNTISNSSSSISSIDNG. The enoyl reductase (ER) domain stretch occupies residues 1718–2053; it reads GIISDLKIKQ…SGNHIGKILI (336 aa). Positions 2083-2277 are ketoreductase (KR) domain; it reads TYIFTGFGGL…LKSSCIHLAS (195 aa). Residues 2379 to 2400 are disordered; sequence GDGSFDDLNQLEDEGQQGFGNG. In terms of domain architecture, Carrier spans 2421–2498; the sequence is FDNDFYTKSI…STVELIKNKL (78 aa). An O-(pantetheine 4'-phosphoryl)serine modification is found at S2458. Residues 2568-2589 are disordered; the sequence is SSSSNNSNSKNELTSPPPSAKR. The chalcone synthase stretch occupies residues 2707–2968; that stretch reads ISHVVGVTST…IEAILFKLIK (262 aa). C2747 is an active-site residue.

It depends on pantetheine 4'-phosphate as a cofactor.

It catalyses the reaction (E)-4-coumaroyl-CoA + 3 malonyl-CoA + 3 H(+) = 2',4,4',6'-tetrahydroxychalcone + 3 CO2 + 4 CoA. It carries out the reaction hexanoyl-CoA + 3 malonyl-CoA + 3 H(+) = 2,4,6-trihydroxyphenylhexan-1-one + 3 CO2 + 4 CoA. It functions in the pathway secondary metabolite biosynthesis; flavonoid biosynthesis. Polyketide synthase; part of the gene cluster that mediates the biosynthesis of DIF-1 (Differentiation Inducing Factor-1), a signal molecule involved in the differentiation of pstO (prestalk-O) cells. The three-step process begins with the formation of (2,4,6-trihydroxyphenyl)-1-hexan-1-one (THPH) by the polyketide synthase StlB. THPH is then dichlorinated by the flavin-dependent halogenase ChlA. The last step of DIF-1 biosynthesis is the O-methylation of dichloro-THPH (or des-methyl-DIF-1) by the methyltransferase DmtA to yield DIF-1. This Dictyostelium discoideum (Social amoeba) protein is Polyketide synthase 37 (StlB).